Consider the following 313-residue polypeptide: MPVRIPDHLPAAEVLESENIFVMSETRAANQDIRPMKVLILNLMPNKIETETQLLRLLGNTPLQVDVDLLRIHDKESKHTSIDHMNTFYRDFEAVRHKNYDGLIITGAPLGQIDFEDVVYWDHIREIIDWSQEHVTSVLFLCWAAHAGLYHLYGLNRKILQQKRSGVFVHRRTSQHFPLLRGFDDEFFAPHSRFAEMDVEEIRQHPQLQLLAESDEAGAYLVLSRNNRNLFVMGHPEYQKSTLNEEYQRDLSQGLDPNVPQNYYRNDDPKDDAIARWHSHGSLLVSNWLNYYVYQLTPYDLSDMTAMTPWESR.

C142 acts as the Acyl-thioester intermediate in catalysis. Substrate is bound by residues K163 and S192. Residue H235 is the Proton acceptor of the active site. E237 is an active-site residue. A substrate-binding site is contributed by R249.

It belongs to the MetA family.

Its subcellular location is the cytoplasm. The enzyme catalyses L-homoserine + succinyl-CoA = O-succinyl-L-homoserine + CoA. It functions in the pathway amino-acid biosynthesis; L-methionine biosynthesis via de novo pathway; O-succinyl-L-homoserine from L-homoserine: step 1/1. Its function is as follows. Transfers a succinyl group from succinyl-CoA to L-homoserine, forming succinyl-L-homoserine. In Shewanella baltica (strain OS195), this protein is Homoserine O-succinyltransferase.